A 264-amino-acid chain; its full sequence is MALLQLERISAQYPGSPEPVLSDISLTLGPQQLLVALGPSGSGKTSLLNLIAGFVEPSAGRITLDNVPVKGPSAERGVVFQDDALLPWQDVLANVAFGLELAGVAKDKREQRAREMLALVDLSGFEHRRIWQLSGGQKQRVGLARALAADPRVLLMDEPFGALDAFTREQMQELLLQVWQRTAKPVFLITHDIEEAVFLATDLILLAPNPGQIVERLHLDFGQRYAAGESARAIKSDPRFIETREHVLAKVFSQRSAVQRQERA.

One can recognise an ABC transporter domain in the interval 4–233 (LQLERISAQY…RYAAGESARA (230 aa)). Position 38–45 (38–45 (GPSGSGKT)) interacts with ATP.

It belongs to the ABC transporter superfamily. Taurine importer (TC 3.A.1.17.1) family. The complex is composed of two ATP-binding proteins (TauB), two transmembrane proteins (TauC) and a solute-binding protein (TauA).

The protein localises to the cell inner membrane. The enzyme catalyses taurine(out) + ATP + H2O = taurine(in) + ADP + phosphate + H(+). In terms of biological role, part of the ABC transporter complex TauABC involved in taurine import. Responsible for energy coupling to the transport system. In Pseudomonas fluorescens (strain Pf0-1), this protein is Taurine import ATP-binding protein TauB.